A 293-amino-acid polypeptide reads, in one-letter code: Ribosomal protein L11 methyltransferase (293 aa).

S-adenosyl-L-methionine is bound by residues Thr145, Gly166, Asp188, and Asn230.

The protein belongs to the methyltransferase superfamily. PrmA family.

The protein resides in the cytoplasm. The enzyme catalyses L-lysyl-[protein] + 3 S-adenosyl-L-methionine = N(6),N(6),N(6)-trimethyl-L-lysyl-[protein] + 3 S-adenosyl-L-homocysteine + 3 H(+). Methylates ribosomal protein L11. The chain is Ribosomal protein L11 methyltransferase from Yersinia pseudotuberculosis serotype O:3 (strain YPIII).